Reading from the N-terminus, the 447-residue chain is 2-oxoadipate dioxygenase/decarboxylase (447 aa).

2-oxoadipate is bound by residues H68, R72, and H224. Fe(2+) is bound at residue H68. Fe(2+)-binding residues include H224 and E290. V391 is a binding site for 2-oxoadipate.

This sequence belongs to the 2-oxoadipate dioxygenase/decarboxylase family. Requires Fe(2+) as cofactor.

The catalysed reaction is 2-oxoadipate + O2 = (R)-2-hydroxyglutarate + CO2. In terms of biological role, catalyzes the decarboxylation and hydroxylation of 2-oxoadipate (2OA) to form D-2-hydroxyglutarate (D-2-HGA). The chain is 2-oxoadipate dioxygenase/decarboxylase (ydcJ) from Escherichia coli (strain K12).